Reading from the N-terminus, the 625-residue chain is Sphingomyelin phosphodiesterase (625 aa).

Residues 1-20 (MPRHGVSPGQGLPRSGREQA) are disordered. An N-terminal signal peptide occupies residues 1 to 40 (MPRHGVSPGQGLPRSGREQASDRSLGAPCLRLLWLGLALA). The 85-residue stretch at 81–165 (WNLTCPTCKG…LLGSSCGHWD (85 aa)) folds into the Saposin B-type domain. Asn-82 is a glycosylation site (N-linked (GlcNAc...) asparagine). Cystine bridges form between Cys-85–Cys-161, Cys-88–Cys-153, and Cys-116–Cys-127. N-linked (GlcNAc...) asparagine glycosylation is present at Asn-171. Asp-202 and His-204 together coordinate Zn(2+). Cystine bridges form between Cys-217–Cys-222 and Cys-223–Cys-246. Zn(2+) contacts are provided by Asp-274 and Asn-314. Residues Asn-331 and Asn-391 are each glycosylated (N-linked (GlcNAc...) asparagine). Cys-381 and Cys-427 are disulfide-bonded. Positions 421, 453, and 455 each coordinate Zn(2+). Asn-499 carries an N-linked (GlcNAc...) asparagine glycan. At Ser-504 the chain carries Phosphoserine. N-linked (GlcNAc...) asparagine glycosylation is present at Asn-516. Intrachain disulfides connect Cys-580–Cys-584 and Cys-590–Cys-603.

It belongs to the acid sphingomyelinase family. In terms of assembly, monomer. Interacts with SORT1; the interaction is required for SMPD1 targeting to lysosomes. Requires Zn(2+) as cofactor. Post-translationally, proteolytically processed. Mature lysosomal form arises from C-terminal proteolytic processing of pro-sphingomyelin phosphodiesterase. Both lysosomal and secreted forms are glycosylated but they show a differential pattern of glycosylation. In terms of processing, phosphorylated at Ser-504 by PRKCD upon stress stimuli. Phosphorylation is required for secretion. Post-translationally, this form is generated following cleavage by CASP7 in the extracellular milieu. It shows increased activity.

It is found in the lysosome. Its subcellular location is the lipid droplet. The protein resides in the secreted. The protein localises to the extracellular space. It catalyses the reaction a sphingomyelin + H2O = phosphocholine + an N-acylsphing-4-enine + H(+). The catalysed reaction is N-(octadecanoyl)-sphing-4-enine-1-phosphocholine + H2O = N-octadecanoylsphing-4-enine + phosphocholine + H(+). The enzyme catalyses a 1,2-diacyl-sn-glycero-3-phosphocholine + H2O = phosphocholine + a 1,2-diacyl-sn-glycerol + H(+). It carries out the reaction 1,2-dihexadecanoyl-sn-glycero-3-phosphocholine + H2O = 1,2-dihexadecanoyl-sn-glycerol + phosphocholine + H(+). Its activity is regulated as follows. Hydrolysis of liposomal sphingomyelin is stimulated by incorporation of diacylglycerol (DAG), ceramide and free fatty acids into the liposomal membranes. Phosphatidylcholine hydrolysis is inhibited by incorporation of cholesterol, ceramide, DAG, monoacylglycerol and fatty acids. Its function is as follows. Converts sphingomyelin to ceramide. Exists as two enzymatic forms that arise from alternative trafficking of a single protein precursor, one that is targeted to the endolysosomal compartment, whereas the other is released extracellularly. However, in response to various forms of stress, lysosomal exocytosis may represent a major source of the secretory form. In the lysosomes, converts sphingomyelin to ceramide. Plays an important role in the export of cholesterol from the intraendolysosomal membranes. Also has phospholipase C activities toward 1,2-diacylglycerolphosphocholine and 1,2-diacylglycerolphosphoglycerol. Modulates stress-induced apoptosis through the production of ceramide. In terms of biological role, when secreted, modulates cell signaling with its ability to reorganize the plasma membrane by converting sphingomyelin to ceramide. Secreted form is increased in response to stress and inflammatory mediators such as IL1B, IFNG or TNF as well as upon infection with bacteria and viruses. Produces the release of ceramide in the outer leaflet of the plasma membrane playing a central role in host defense. Ceramide reorganizes these rafts into larger signaling platforms that are required to internalize bacteria, induce apoptosis and regulate the cytokine response in infected cells. In wounded cells, the lysosomal form is released extracellularly in the presence of Ca(2+) and promotes endocytosis and plasma membrane repair. Functionally, this form is generated following cleavage by CASP7 in the extracellular milieu in response to bacterial infection. It shows increased ability to convert sphingomyelin to ceramide and promotes plasma membrane repair. Plasma membrane repair by ceramide counteracts the action of gasdermin-D (GSDMD) perforin (PRF1) pores that are formed in response to bacterial infection. This chain is Sphingomyelin phosphodiesterase (SMPD1), found in Bos taurus (Bovine).